The primary structure comprises 386 residues: Cell division protein FtsZ (386 aa).

GTP is bound by residues glycine 21–asparagine 25, glycine 108–glycine 110, glutamate 139, arginine 143, and asparagine 187.

Belongs to the FtsZ family. In terms of assembly, homodimer. Polymerizes to form a dynamic ring structure in a strictly GTP-dependent manner. Interacts directly with several other division proteins.

The protein localises to the cytoplasm. Functionally, essential cell division protein that forms a contractile ring structure (Z ring) at the future cell division site. The regulation of the ring assembly controls the timing and the location of cell division. One of the functions of the FtsZ ring is to recruit other cell division proteins to the septum to produce a new cell wall between the dividing cells. Binds GTP and shows GTPase activity. The protein is Cell division protein FtsZ of Coxiella burnetii (strain RSA 493 / Nine Mile phase I).